A 220-amino-acid polypeptide reads, in one-letter code: Adapter protein MecA (220 aa).

It belongs to the MecA family. As to quaternary structure, homodimer.

Functionally, enables the recognition and targeting of unfolded and aggregated proteins to the ClpC protease or to other proteins involved in proteolysis. The chain is Adapter protein MecA from Enterococcus faecalis (strain ATCC 700802 / V583).